Here is a 506-residue protein sequence, read N- to C-terminus: Acetylcholine receptor subunit gamma (506 aa).

A signal peptide spans 1–17 (MVLTLLLIICLALEVRS). Over 18 to 235 (ENEEGRLIEK…IIFFLIIQRK (218 aa)) the chain is Extracellular. The N-linked (GlcNAc...) asparagine glycan is linked to Asn85. A disulfide bond links Cys145 and Cys159. 3 helical membrane passes run 236 to 260 (PLFY…VYFL), 269 to 287 (CTLS…FLIA), and 303 to 324 (YLIF…VLNV). The Cytoplasmic portion of the chain corresponds to 325–466 (SLRTPNTHSL…WVLIGKVIDK (142 aa)). The residue at position 381 (Tyr381) is a Phosphotyrosine; by Tyr-kinases. Residues 467–490 (ACFWIALLLFSIGTLAIFLTGHFN) form a helical membrane-spanning segment.

It belongs to the ligand-gated ion channel (TC 1.A.9) family. Acetylcholine receptor (TC 1.A.9.1) subfamily. Gamma/CHRNG sub-subfamily. As to quaternary structure, pentamer of two alpha chains, and one each of the beta, delta, and gamma chains. In terms of processing, seems not to be glycosylated on Asn-158.

It localises to the postsynaptic cell membrane. It is found in the cell membrane. It catalyses the reaction K(+)(in) = K(+)(out). The catalysed reaction is Na(+)(in) = Na(+)(out). After binding acetylcholine, the AChR responds by an extensive change in conformation that affects all subunits and leads to opening of an ion-conducting channel across the plasma membrane. The protein is Acetylcholine receptor subunit gamma (CHRNG) of Tetronarce californica (Pacific electric ray).